A 504-amino-acid polypeptide reads, in one-letter code: Maturase K (504 aa).

The protein belongs to the intron maturase 2 family. MatK subfamily.

The protein resides in the plastid. Its subcellular location is the chloroplast. Its function is as follows. Usually encoded in the trnK tRNA gene intron. Probably assists in splicing its own and other chloroplast group II introns. This Quercus suber (Cork oak) protein is Maturase K.